A 387-amino-acid chain; its full sequence is Pepsin A (387 aa).

The N-terminal stretch at 1–16 (MKKLLLLLGLVALSEC) is a signal peptide. Residues 17–61 (LYKVPLVKKKSLRQNLIENGLLKDFLAKHNVNPASKYFPTEAATE) constitute a propeptide, activation peptide. The 310-residue stretch at 75–384 (YFGTIGIGTP…DRGNNRVGLA (310 aa)) folds into the Peptidase A1 domain. Residue D93 is part of the active site. A disulfide bridge connects residues C106 and C111. S129 is modified (phosphoserine). C267 and C271 are joined by a disulfide. D276 is a catalytic residue. C310 and C343 are joined by a disulfide.

This sequence belongs to the peptidase A1 family.

It is found in the secreted. It catalyses the reaction Preferential cleavage: hydrophobic, preferably aromatic, residues in P1 and P1' positions. Cleaves 1-Phe-|-Val-2, 4-Gln-|-His-5, 13-Glu-|-Ala-14, 14-Ala-|-Leu-15, 15-Leu-|-Tyr-16, 16-Tyr-|-Leu-17, 23-Gly-|-Phe-24, 24-Phe-|-Phe-25 and 25-Phe-|-Tyr-26 bonds in the B chain of insulin.. Functionally, shows particularly broad specificity; although bonds involving phenylalanine and leucine are preferred, many others are also cleaved to some extent. This Suncus murinus (Asian house shrew) protein is Pepsin A (PGA).